The sequence spans 306 residues: MNLKQEKIAVLLGGTSAEREVSFNSGKAVLEALLKQGYNAHPIDPKEYNVANLKKDGFNRAFNILHGRGGEDGTMQGLLEQIGLPYTGCGVMASALTMDKMRTKMLWKAFGLPVADMKVVTRETFSELDPQAVVAKLGLPLMVKPSLEGSSVGLTKVKAVEELKSAVEYALKFDNTILIEEWLAGDELTVPVLDNQVLPAIRIVPEGEFYDYEAKYISDNTQYFCPAGLTPEREQELAILVKRAYDALGCRGWSRIDVMCDAKGNFRLVEVNTNPGMTSHSLFPKSAATVGISFEQLVVKILELSL.

Positions Lys-104–Glu-303 constitute an ATP-grasp domain. Residue Val-134–Thr-189 participates in ATP binding. The Mg(2+) site is built by Asp-257, Glu-270, and Asn-272.

It belongs to the D-alanine--D-alanine ligase family. The cofactor is Mg(2+). Mn(2+) serves as cofactor.

The protein resides in the cytoplasm. It catalyses the reaction 2 D-alanine + ATP = D-alanyl-D-alanine + ADP + phosphate + H(+). It functions in the pathway cell wall biogenesis; peptidoglycan biosynthesis. Functionally, cell wall formation. This is D-alanine--D-alanine ligase from Haemophilus influenzae (strain 86-028NP).